The sequence spans 162 residues: MGLETEKADVQLFMDDDSYSHHSGLEYADPEKFADSGQDRDPHRLNSHLKLGFEDVIAEPVTTHSFDKVWICSHALFEISKYVMYKFLTVFLAIPLAFIAGILFATLSCLHIWILMPFVKTCLMVLPSVQTIWKSVTDVFIAPLCTSIGRSFSSVSLQLSQD.

Topologically, residues 1–86 (MGLETEKADV…FEISKYVMYK (86 aa)) are cytoplasmic. Tyr-19 is modified (phosphotyrosine; by SRC). Residues Ser-20 and Ser-23 each carry the phosphoserine modification. Tyr-27 is subject to Phosphotyrosine; by SRC. The residue at position 36 (Ser-36) is a Phosphoserine. An intramembrane region (helical) is located at residues 87 to 107 (FLTVFLAIPLAFIAGILFATL). Residues 108 to 162 (SCLHIWILMPFVKTCLMVLPSVQTIWKSVTDVFIAPLCTSIGRSFSSVSLQLSQD) are Cytoplasmic-facing.

This sequence belongs to the caveolin family. As to quaternary structure, monomer or homodimer. Interacts with CAV1; the interaction forms a stable heterooligomeric complex that is required for targeting to lipid rafts and for caveolae formation. Tyrosine phosphorylated forms do not form heterooligomers with the Tyr-19-phosphorylated form existing as a monomer or dimer, and the Tyr-27-form as a monomer only. Interacts (tyrosine phosphorylated form) with the SH2 domain-containing proteins, RASA1, NCK1 and SRC. Interacts (tyrosine phosphorylated form) with INSR, the interaction (Tyr-27-phosphorylated form) is increased on insulin stimulation. Interacts (Tyr-19 phosphorylated form) with MAPK1 (phosphorylated form); the interaction, promoted by insulin, leads to nuclear location and MAPK1 activation. Interacts with STAT3; the interaction is increased on insulin-induced tyrosine phosphorylation leading to STAT activation. Post-translationally, phosphorylated on serine and tyrosine residues. CAV1 promotes phosphorylation on Ser-23 which then targets the complex to the plasma membrane, lipid rafts and caveolae. Phosphorylation on Ser-36 appears to modulate mitosis in endothelial cells. Phosphorylation on both Tyr-19 and Tyr-27 is required for insulin-induced 'Ser-727' phosphorylation of STAT3 and its activation. Phosphorylation on Tyr-19 is required for insulin-induced phosphorylation of MAPK1 and DNA binding of STAT3. Tyrosine phosphorylation is induced by both EGF and insulin (By. similarity).

It is found in the nucleus. The protein resides in the cytoplasm. The protein localises to the golgi apparatus membrane. Its subcellular location is the cell membrane. It localises to the membrane. It is found in the caveola. Functionally, may act as a scaffolding protein within caveolar membranes. Interacts directly with G-protein alpha subunits and can functionally regulate their activity. Acts as an accessory protein in conjunction with CAV1 in targeting to lipid rafts and driving caveolae formation. The Ser-36 phosphorylated form has a role in modulating mitosis in endothelial cells. Positive regulator of cellular mitogenesis of the MAPK signaling pathway. Required for the insulin-stimulated nuclear translocation and activation of MAPK1 and STAT3, and the subsequent regulation of cell cycle progression. The chain is Caveolin-2 (CAV2) from Papio anubis (Olive baboon).